A 451-amino-acid polypeptide reads, in one-letter code: MVNFVHPEEMYLFVESIRPFEVREVGSPKWLEVHEMILGLSQQAALELSQNREEEVKEFLISRDKLRVLIHEAYCVTLWKTRVLPHLLEIDPNPQATFLIYTVLYHEAALVALLDVCLYHPSGCETLQESVLDLIDYCAQAISQVIGLVSMGYHENETKLDVDEAVLTELERQKRDFIYKIGLRCISVLNYIADNVTLFHLSAARRLLVTHDIPWLMADVLSFRPWQRKTSKGIQKFIDEKWTNVDDVTKIVKPEAQAWFCVRQLLLNPQIMENYAFNEARCKQLHKLLGLMHEPLLDQLPPLIELKVFLSRLTLSGNTAKTQPLLLEDIPQIQEELLKDVEENGGFYQIAQDQDSVFLSKNKENICALATRLSKAYGTDLLCELEQNMDDLKMGEAKDAGAGGDGDTDHTCATCQAKAKKKCACCKKVHYCSRDCQLKDWPQHKLVCLKT.

Residues C412, C415, C423, C426, C432, C436, H444, and C448 each coordinate Zn(2+). The MYND-type zinc-finger motif lies at 412–448; the sequence is CATCQAKAKKKCACCKKVHYCSRDCQLKDWPQHKLVC.

This sequence belongs to the ZMYND10 family. As to expression, specifically expressed in cells with flagella and motile cilia: chordotonal sensory neurons and sperm.

Its subcellular location is the cytoplasm. The protein localises to the cell projection. The protein resides in the cilium. It is found in the dynein axonemal particle. Its function is as follows. Plays a role in axonemal structure organization and motility. May be involved in axonemal pre-assembly of inner and outer dynein arms (IDA and ODA, respectively) for proper axoneme building for cilia motility. This Drosophila melanogaster (Fruit fly) protein is Zinc finger MYND domain-containing protein 10 homolog.